Reading from the N-terminus, the 171-residue chain is uncharacterized protein (171 aa).

Residues 123 to 171 form a disordered region; the sequence is CTKRDLRNDPPPAYQPDDPLKDLRKNFEKKEKPTWNDVEKKKNGVFEFH. Basic and acidic residues predominate over residues 140-171; the sequence is DPLKDLRKNFEKKEKPTWNDVEKKKNGVFEFH.

This is an uncharacterized protein from Caenorhabditis elegans.